Consider the following 144-residue polypeptide: Cathelicidin-4 (144 aa).

An N-terminal signal peptide occupies residues 1–29; it reads MQTQRASLSLGRWSLWLLLLGLVVPSASA. The propeptide occupies 30 to 130; sequence QALSYREAVL…DLNCNELQSV (101 aa). 2 cysteine pairs are disulfide-bonded: C85–C96 and C107–C124. Position 143 is an arginine amide (R143).

This sequence belongs to the cathelicidin family. In terms of processing, elastase might be responsible for its maturation. As to expression, large granules of neutrophils.

It localises to the secreted. In terms of biological role, potent microbicidal activity; active against S.aureus and E.coli. The sequence is that of Cathelicidin-4 (CATHL4) from Bos taurus (Bovine).